The primary structure comprises 1012 residues: MHWGLCPRGPGAAAVAAAGSFWGPARLPSRLGCLGMTRRLVVRSVAGADSPQSSSKGGRYRDTVLLPQTSFPMKLLGRQQSDMELEIQQKCGFSELYSWQRERKVKTEFCLHDGPPYANGDPHVGHALNKILKDIANRFHMMRGSKVHFVPGWDCHGLPIETKVLSELGVDAQSLSAMEIREKARSFAQAAIEKQKSAFVRWGVMADWNNCYYTFDPKYEAKQLRVFYQMYEKGLVYRSYKPVYWSPSSRTALAEAELEYNPEHVSRSIYVRFPLLRPPPKLESLTDASSPVSVLVWTTQPWTIPANQAICYMPEAKYAVVKCSASGHLYILAEDKIAPVASALETTFDVVAAFSGVDLEGGTCSHPLTPDKVSPLLPATHVTMAKGTGLVHTAPAHGMEDYSVASQHSLPMDCLVDEGGMFTDAAGPELQNKAVLKEGTDVVIKMLQATKNVLKEENIVHSYPCDWRTKTPVLIRASKQWFVNITDIKAAAKESLKTVKFIPGAALNSMTDMLDRRPYWCISRQRVWGVPIPVFHHKTKDEYLINSQTTEHIIKLVEQHGSDVWWTLPAEQLLPAEVLAQAGGPGALEYAPGQDILDIWFDSGTSWSCVLQDTQQRADLYLEGKDQLGGWFQSSLLTSVATRSKAPFRTVMVHGFTLGEKGEKMSKSLGNVINPDTIISGGKDHSKEPPYGADILRWWIAESNVFTEVTIGPSVLSAARDDISKLRNTLRFLLGNLTGFNPETDSVPVKNMYVIDQYMLHLIQDFATKITDSYKQYDFGKVVRLLKAFYTRELSSFYFSIVKDRLYCENEKDPKRRSCQTALAEILDVLVRAFAPILPHLAEEVFQHIPYVTEPKSVFRTGWINTSSIWKKPGLEEAVESACAMRDSFLGSIPGKNAAEYEVIIVIEPGLLFEIMEMLQAEETSSTSQLNELMMASQTTLLAQEPRERTAGDIELTGTFVINLEGGDIREESSYKVIVVPTAREKCPRCWKHTSETADALCPRCAEVIGAK.

Residues Met-1 to Ala-48 constitute a mitochondrion transit peptide. Residue Lys-56 is modified to N6-succinyllysine. N6-acetyllysine; alternate is present on Lys-74. Lys-74 carries the post-translational modification N6-succinyllysine; alternate. A 'HIGH' region motif is present at residues Pro-116 to His-126. An N6-succinyllysine modification is found at Lys-194. At Lys-233 the chain carries N6-acetyllysine. N6-acetyllysine; alternate is present on Lys-241. Lys-241 carries the N6-succinyllysine; alternate modification. 2 positions are modified to N6-succinyllysine: Lys-479 and Lys-500. Lys-664 and Lys-667 together coordinate ATP. Residues Lys-664 to Ser-668 carry the 'KMSKS' region motif. Lys-725 carries the N6-acetyllysine modification. 2 positions are modified to N6-acetyllysine; alternate: Lys-775 and Lys-781. 2 positions are modified to N6-succinyllysine; alternate: Lys-775 and Lys-781.

Belongs to the class-I aminoacyl-tRNA synthetase family.

It is found in the mitochondrion matrix. The catalysed reaction is tRNA(Ile) + L-isoleucine + ATP = L-isoleucyl-tRNA(Ile) + AMP + diphosphate. Its function is as follows. Aminoacyl-tRNA synthetase that catalyzes the specific attachment of isoleucine to its cognate tRNA (tRNA(Ile)). The sequence is that of Isoleucine--tRNA ligase, mitochondrial from Mus musculus (Mouse).